The primary structure comprises 451 residues: Tubulin gamma-1 chain (451 aa).

GTP is bound at residue 142 to 148 (AGGTGSG).

Belongs to the tubulin family.

It is found in the cytoplasm. The protein resides in the cytoskeleton. It localises to the microtubule organizing center. Its subcellular location is the centrosome. The protein localises to the spindle. Its function is as follows. Tubulin is the major constituent of microtubules. The gamma chain is found at microtubule organizing centers (MTOC) such as the spindle poles or the centrosome, suggesting that it is involved in the minus-end nucleation of microtubule assembly. This Xenopus laevis (African clawed frog) protein is Tubulin gamma-1 chain (tubg1).